Here is an 859-residue protein sequence, read N- to C-terminus: Cleavage factor two protein 2 (859 aa).

The disordered stretch occupies residues Pro-560–Arg-611. The segment covering Asn-586–Gly-597 has biased composition (acidic residues).

As to quaternary structure, component of the cleavage and polyadenylation factor (CPF) complex, which is composed of at least PTI1, SYC1, SSU72, GLC7, MPE1, REF2, PFS2, PTA1, YSH1/BRR5, SWD2, CFT2/YDH1, YTH1, CFT1/YHH1, FIP1 and PAP1. Interacts with the CTD domain of RPB1/RNA polymerase II; the interaction is enhanced upon phosphorylation of the RPB1 CTD domain. Interacts with PCF11.

The protein localises to the nucleus. Functionally, RNA-binding component of the cleavage and polyadenylation factor (CPF) complex, which plays a key role in polyadenylation-dependent pre-mRNA 3'-end formation and cooperates with cleavage factors including the CFIA complex and NAB4/CFIB. May be involved in poly(A)-site recognition. May be involved in the association of the CPF, CPFIA and RNA polymerase II complexes. The chain is Cleavage factor two protein 2 (CFT2) from Saccharomyces cerevisiae (strain ATCC 204508 / S288c) (Baker's yeast).